Here is a 400-residue protein sequence, read N- to C-terminus: Chalcone synthase WHP1 (400 aa).

Cys167 is an active-site residue.

It belongs to the thiolase-like superfamily. Chalcone/stilbene synthases family.

The enzyme catalyses (E)-4-coumaroyl-CoA + 3 malonyl-CoA + 3 H(+) = 2',4,4',6'-tetrahydroxychalcone + 3 CO2 + 4 CoA. It participates in secondary metabolite biosynthesis; flavonoid biosynthesis. Functionally, the primary product of this enzyme is 4,2',4',6'-tetrahydroxychalcone (also termed naringenin-chalcone or chalcone) which can under specific conditions spontaneously isomerize into naringenin. This chain is Chalcone synthase WHP1 (WHP1), found in Zea mays (Maize).